A 301-amino-acid chain; its full sequence is Probable alpha-L-glutamate ligase 1 (301 aa).

Residues 104–287 form the ATP-grasp domain; the sequence is LQLLSRKNIG…VAEKIIQFIE (184 aa). Residues Lys-141, 178–179, Asp-187, and 211–213 contribute to the ATP site; these read EY and RSN. Positions 248, 260, and 262 each coordinate Mg(2+). Residues Asp-248, Glu-260, and Asn-262 each coordinate Mn(2+).

Belongs to the RimK family. Requires Mg(2+) as cofactor. Mn(2+) is required as a cofactor.

In Shewanella frigidimarina (strain NCIMB 400), this protein is Probable alpha-L-glutamate ligase 1.